We begin with the raw amino-acid sequence, 143 residues long: SsrA-binding protein (143 aa).

Belongs to the SmpB family.

It is found in the cytoplasm. Functionally, required for rescue of stalled ribosomes mediated by trans-translation. Binds to transfer-messenger RNA (tmRNA), required for stable association of tmRNA with ribosomes. tmRNA and SmpB together mimic tRNA shape, replacing the anticodon stem-loop with SmpB. tmRNA is encoded by the ssrA gene; the 2 termini fold to resemble tRNA(Ala) and it encodes a 'tag peptide', a short internal open reading frame. During trans-translation Ala-aminoacylated tmRNA acts like a tRNA, entering the A-site of stalled ribosomes, displacing the stalled mRNA. The ribosome then switches to translate the ORF on the tmRNA; the nascent peptide is terminated with the 'tag peptide' encoded by the tmRNA and targeted for degradation. The ribosome is freed to recommence translation, which seems to be the essential function of trans-translation. The polypeptide is SsrA-binding protein (Deinococcus radiodurans (strain ATCC 13939 / DSM 20539 / JCM 16871 / CCUG 27074 / LMG 4051 / NBRC 15346 / NCIMB 9279 / VKM B-1422 / R1)).